The primary structure comprises 427 residues: 3-phosphoshikimate 1-carboxyvinyltransferase (427 aa).

3-phosphoshikimate-binding residues include Lys23, Ser24, and Arg28. Residue Lys23 participates in phosphoenolpyruvate binding. 2 residues coordinate phosphoenolpyruvate: Gly97 and Arg125. Residues Ser170, Ser171, Gln172, Ser198, Asp314, Asn337, and Lys341 each coordinate 3-phosphoshikimate. Phosphoenolpyruvate is bound at residue Gln172. Catalysis depends on Asp314, which acts as the Proton acceptor. Positions 345, 387, and 412 each coordinate phosphoenolpyruvate.

The protein belongs to the EPSP synthase family. As to quaternary structure, monomer.

The protein resides in the cytoplasm. It catalyses the reaction 3-phosphoshikimate + phosphoenolpyruvate = 5-O-(1-carboxyvinyl)-3-phosphoshikimate + phosphate. It functions in the pathway metabolic intermediate biosynthesis; chorismate biosynthesis; chorismate from D-erythrose 4-phosphate and phosphoenolpyruvate: step 6/7. Functionally, catalyzes the transfer of the enolpyruvyl moiety of phosphoenolpyruvate (PEP) to the 5-hydroxyl of shikimate-3-phosphate (S3P) to produce enolpyruvyl shikimate-3-phosphate and inorganic phosphate. The sequence is that of 3-phosphoshikimate 1-carboxyvinyltransferase from Buchnera aphidicola subsp. Acyrthosiphon pisum (strain Tuc7).